The chain runs to 94 residues: MVRTNVVSFVLFAAIVLCIGSIQIDGQKHTAPWIPEDNSICCKEHPSVGRCLPNIDDSAEKGGKCWKFCIEGCETGGFCKLFGHKHICHCNCSG.

Positions methionine 1–glycine 26 are cleaved as a signal peptide. Intrachain disulfides connect cysteine 41–cysteine 92, cysteine 51–cysteine 79, cysteine 65–cysteine 88, and cysteine 69–cysteine 90.

The protein belongs to the DEFL family.

Its subcellular location is the secreted. The polypeptide is Defensin-like protein 21 (Arabidopsis thaliana (Mouse-ear cress)).